Reading from the N-terminus, the 122-residue chain is Large ribosomal subunit protein uL18 (122 aa).

Belongs to the universal ribosomal protein uL18 family. Part of the 50S ribosomal subunit; part of the 5S rRNA/L5/L18/L25 subcomplex. Contacts the 5S and 23S rRNAs.

This is one of the proteins that bind and probably mediate the attachment of the 5S RNA into the large ribosomal subunit, where it forms part of the central protuberance. The protein is Large ribosomal subunit protein uL18 of Heliobacterium modesticaldum (strain ATCC 51547 / Ice1).